Consider the following 147-residue polypeptide: Large ribosomal subunit protein uL15 (147 aa).

The interval 20 to 54 (GRGIGSGKGKTSGKGHKGQKARGTGKVHPWFEGGQ) is disordered. Residues 30 to 44 (TSGKGHKGQKARGTG) are compositionally biased toward basic residues.

It belongs to the universal ribosomal protein uL15 family. As to quaternary structure, part of the 50S ribosomal subunit.

Its function is as follows. Binds to the 23S rRNA. This is Large ribosomal subunit protein uL15 from Thermosipho africanus (strain TCF52B).